Consider the following 493-residue polypeptide: Succinate-semialdehyde dehydrogenase [NADP(+)] 2 (493 aa).

242–247 (GSTNVG) is a binding site for NAD(+). The active site involves Glu264. Cys298 serves as the catalytic Nucleophile.

The protein belongs to the aldehyde dehydrogenase family. Homotetramer.

It is found in the cytoplasm. The catalysed reaction is succinate semialdehyde + NAD(+) + H2O = succinate + NADH + 2 H(+). The enzyme catalyses succinate semialdehyde + NADP(+) + H2O = succinate + NADPH + 2 H(+). It participates in amino-acid degradation; 4-aminobutanoate degradation. Its function is as follows. Catalyzes the oxidation of succinate semialdehyde to succinate. Can utilize both NAD(+) or NADP(+) as a coenzyme. Functions in the GABA shunt, which allows to bypass 2 reactions in the TCA cycle by removing alpha-ketoglutarate from the cycle and feeding succinate and NADH back into the cycle. The protein is Succinate-semialdehyde dehydrogenase [NADP(+)] 2 (ssd2) of Schizosaccharomyces pombe (strain 972 / ATCC 24843) (Fission yeast).